We begin with the raw amino-acid sequence, 207 residues long: Thymidylate kinase (207 aa).

9–16 (GGEGCGKS) serves as a coordination point for ATP.

This sequence belongs to the thymidylate kinase family.

The catalysed reaction is dTMP + ATP = dTDP + ADP. Functionally, phosphorylation of dTMP to form dTDP in both de novo and salvage pathways of dTTP synthesis. The protein is Thymidylate kinase of Dehalococcoides mccartyi (strain ATCC BAA-2266 / KCTC 15142 / 195) (Dehalococcoides ethenogenes (strain 195)).